Reading from the N-terminus, the 396-residue chain is Capsular polysaccharide biosynthesis protein CapF (396 aa).

12 helical membrane-spanning segments follow: residues 7–27 (YMFV…LVIV), 41–61 (ALVI…SVIV), 74–94 (AILS…YVLG), 101–121 (ILIV…YGIY), 129–149 (LLGI…YIIY), 153–173 (HNLN…FAII), 198–218 (IFIL…NTGI), 232–252 (LGIF…ANSI), 279–299 (MVFI…FLGE), 315–335 (IILI…FLGT), 351–371 (LILL…YSLL), and 372–392 (GAAL…YYFY).

This sequence belongs to the polysaccharide synthase family.

The protein resides in the cell membrane. The protein operates within capsule biogenesis; capsule polysaccharide biosynthesis. Its function is as follows. Required for the biosynthesis of type 1 capsular polysaccharide. This chain is Capsular polysaccharide biosynthesis protein CapF (capF), found in Staphylococcus aureus.